Reading from the N-terminus, the 330-residue chain is MKQHYIRSQQQISFVKEMFSRQLAQQLGLMEVQAPILSRVGDGTQDNLSGSENAVQVKVKTLPGHSYEVVHSLAKWKRQTLGRFGFGPGEGIYTHMKALRPDEDKLTPIHSVYVDQWDWEKVMPSERRDLAYLQETVRGIWAAIKATERAVCAEHELTPFLPGEIQFLHSEALLARYPDLDAKGRERAIAKELGAVFLIGIGGALSHGERHDVRAPDYDDWSSHSELGLAGLNGDILVWNPVLEDSFEISSMGIRVDAEALRRQLAITGDEGRLQYDWHRDLLAERMPQTIGGGIGQSRLAMLLLQKEHIGQVQVGVWPSEMKAAIPGML.

Belongs to the class-II aminoacyl-tRNA synthetase family. AsnA subfamily.

The protein resides in the cytoplasm. It catalyses the reaction L-aspartate + NH4(+) + ATP = L-asparagine + AMP + diphosphate + H(+). It functions in the pathway amino-acid biosynthesis; L-asparagine biosynthesis; L-asparagine from L-aspartate (ammonia route): step 1/1. This is Aspartate--ammonia ligase from Aeromonas salmonicida (strain A449).